The chain runs to 173 residues: Co-chaperone protein HscB homolog (173 aa).

A J domain is found at 5–77; it reads CHFALFELKP…PKRARYLLAM (73 aa).

Belongs to the HscB family. As to quaternary structure, interacts with HscA and stimulates its ATPase activity.

Functionally, co-chaperone involved in the maturation of iron-sulfur cluster-containing proteins. Seems to help targeting proteins to be folded toward HscA. In Pseudomonas syringae pv. tomato (strain ATCC BAA-871 / DC3000), this protein is Co-chaperone protein HscB homolog.